A 259-amino-acid polypeptide reads, in one-letter code: Ribosomal RNA small subunit methyltransferase A (259 aa).

The S-adenosyl-L-methionine site is built by asparagine 12, leucine 14, glycine 39, glutamate 60, aspartate 84, and asparagine 102.

The protein belongs to the class I-like SAM-binding methyltransferase superfamily. rRNA adenine N(6)-methyltransferase family. RsmA subfamily.

Its subcellular location is the cytoplasm. It carries out the reaction adenosine(1518)/adenosine(1519) in 16S rRNA + 4 S-adenosyl-L-methionine = N(6)-dimethyladenosine(1518)/N(6)-dimethyladenosine(1519) in 16S rRNA + 4 S-adenosyl-L-homocysteine + 4 H(+). Functionally, specifically dimethylates two adjacent adenosines (A1518 and A1519) in the loop of a conserved hairpin near the 3'-end of 16S rRNA in the 30S particle. May play a critical role in biogenesis of 30S subunits. This is Ribosomal RNA small subunit methyltransferase A from Nitrosospira multiformis (strain ATCC 25196 / NCIMB 11849 / C 71).